Reading from the N-terminus, the 252-residue chain is Ubiquitin carboxyl-terminal hydrolase isozyme L1 (252 aa).

Position 1 is an N-acetylmethionine (methionine 1). Residues 2-250 (QLKPMEINPE…VRFSAVALCK (249 aa)) form the UCH catalytic domain. Residues 5 to 10 (PMEINP) are interaction with ubiquitin. Cysteine 119 (nucleophile) is an active-site residue. The residue at position 154 (serine 154) is a Phosphoserine. Histidine 190 functions as the Proton donor in the catalytic mechanism. The interaction with ubiquitin stretch occupies residues 240 to 245 (EVRFSA). Cysteine 249 is lipidated: S-farnesyl cysteine. Positions 250 to 252 (KAA) are cleaved as a propeptide — removed in mature form.

Belongs to the peptidase C12 family. As to quaternary structure, monomer. Homodimer. Interacts with COPS5 and SNCA. In terms of processing, O-glycosylated. In terms of tissue distribution, neurons and cells of the diffuse neuroendocrine system and their tumors.

It localises to the cytoplasm. Its subcellular location is the endoplasmic reticulum membrane. It catalyses the reaction Thiol-dependent hydrolysis of ester, thioester, amide, peptide and isopeptide bonds formed by the C-terminal Gly of ubiquitin (a 76-residue protein attached to proteins as an intracellular targeting signal).. Its function is as follows. Ubiquitin-protein hydrolase involved both in the processing of ubiquitin precursors and of ubiquitinated proteins. This enzyme is a thiol protease that recognizes and hydrolyzes a peptide bond at the C-terminal glycine of ubiquitin. Also binds to free monoubiquitin and may prevent its degradation in lysosomes. The homodimer may have ATP-independent ubiquitin ligase activity. This Bos taurus (Bovine) protein is Ubiquitin carboxyl-terminal hydrolase isozyme L1 (UCHL1).